A 238-amino-acid polypeptide reads, in one-letter code: Sugar fermentation stimulation protein homolog (238 aa).

The protein belongs to the SfsA family.

This chain is Sugar fermentation stimulation protein homolog, found in Alkalilimnicola ehrlichii (strain ATCC BAA-1101 / DSM 17681 / MLHE-1).